The chain runs to 452 residues: Ketoisovalerate reductase BEA2 (452 aa).

70–75 lines the NADP(+) pocket; the sequence is GPGNIG. The active-site Proton donor is lysine 285. Substrate is bound by residues asparagine 289, asparagine 293, and serine 393. Glutamate 405 lines the NADP(+) pocket.

The protein belongs to the ketopantoate reductase family.

The enzyme catalyses (R)-2-hydroxy-3-methylbutanoate + NADP(+) = 3-methyl-2-oxobutanoate + NADPH + H(+). Ketoisovalerate reductase; part of the gene cluster that mediates the biosynthesis of beauvericin (BEA), a non-ribosomal cyclic hexadepsipeptide that shows antibiotic, antifungal, insecticidal, and cancer cell antiproliferative and antihaptotactic activity. Ketoisovalerate reductase BEA2 catalyzes the NADPH-specific reduction of ketoisovaleric acid to hydroxyisovalerate, a precursor for beauvericin biosynthesis. The nonribosomal cyclodepsipeptide synthetase BEA1 then catalyzes the formation of beauvericin via condensation and cyclization of 3 dipeptidol monomers, each composed of one unit of hydroxyisovalerate and one unit of N-methyl-phenylalanine. The polypeptide is Ketoisovalerate reductase BEA2 (Gibberella fujikuroi (strain CBS 195.34 / IMI 58289 / NRRL A-6831) (Bakanae and foot rot disease fungus)).